The sequence spans 379 residues: Glutamate 5-kinase (379 aa).

Lys15 is an ATP binding site. Substrate-binding residues include Ser54, Asp144, and Asn156. 176-177 (TD) lines the ATP pocket. In terms of domain architecture, PUA spans 282-360 (KGVILVDAGA…GEIERALGYK (79 aa)).

This sequence belongs to the glutamate 5-kinase family.

It localises to the cytoplasm. The enzyme catalyses L-glutamate + ATP = L-glutamyl 5-phosphate + ADP. It functions in the pathway amino-acid biosynthesis; L-proline biosynthesis; L-glutamate 5-semialdehyde from L-glutamate: step 1/2. Catalyzes the transfer of a phosphate group to glutamate to form L-glutamate 5-phosphate. This is Glutamate 5-kinase from Anaeromyxobacter dehalogenans (strain 2CP-C).